A 321-amino-acid chain; its full sequence is UPF0026 protein MJ1312 (321 aa).

The Radical SAM core domain maps to 11–236 (RRLGKSLGIN…AIFNEIIGKN (226 aa)). The [4Fe-4S] cluster site is built by Cys-27, Cys-31, and Cys-34.

It belongs to the UPF0026 family. [4Fe-4S] cluster is required as a cofactor.

This chain is UPF0026 protein MJ1312, found in Methanocaldococcus jannaschii (strain ATCC 43067 / DSM 2661 / JAL-1 / JCM 10045 / NBRC 100440) (Methanococcus jannaschii).